Here is a 450-residue protein sequence, read N- to C-terminus: UDP-N-acetylmuramoylalanine--D-glutamate ligase (450 aa).

119 to 125 (GSNGKTT) contacts ATP.

This sequence belongs to the MurCDEF family.

It is found in the cytoplasm. The enzyme catalyses UDP-N-acetyl-alpha-D-muramoyl-L-alanine + D-glutamate + ATP = UDP-N-acetyl-alpha-D-muramoyl-L-alanyl-D-glutamate + ADP + phosphate + H(+). It participates in cell wall biogenesis; peptidoglycan biosynthesis. Functionally, cell wall formation. Catalyzes the addition of glutamate to the nucleotide precursor UDP-N-acetylmuramoyl-L-alanine (UMA). The chain is UDP-N-acetylmuramoylalanine--D-glutamate ligase from Streptococcus pneumoniae (strain Taiwan19F-14).